The primary structure comprises 341 residues: Phosphate acyltransferase (341 aa).

Belongs to the PlsX family. As to quaternary structure, homodimer. Probably interacts with PlsY.

The protein resides in the cytoplasm. The catalysed reaction is a fatty acyl-[ACP] + phosphate = an acyl phosphate + holo-[ACP]. Its pathway is lipid metabolism; phospholipid metabolism. In terms of biological role, catalyzes the reversible formation of acyl-phosphate (acyl-PO(4)) from acyl-[acyl-carrier-protein] (acyl-ACP). This enzyme utilizes acyl-ACP as fatty acyl donor, but not acyl-CoA. The chain is Phosphate acyltransferase from Ehrlichia ruminantium (strain Gardel).